Consider the following 318-residue polypeptide: B3 domain-containing protein At1g05930 (318 aa).

A DNA-binding region (TF-B3) is located at residues F201–R293.

Its subcellular location is the nucleus. This Arabidopsis thaliana (Mouse-ear cress) protein is B3 domain-containing protein At1g05930.